A 358-amino-acid chain; its full sequence is Histidinol-phosphate aminotransferase (358 aa).

Position 218 is an N6-(pyridoxal phosphate)lysine (lysine 218).

Belongs to the class-II pyridoxal-phosphate-dependent aminotransferase family. Histidinol-phosphate aminotransferase subfamily. As to quaternary structure, homodimer. The cofactor is pyridoxal 5'-phosphate.

It catalyses the reaction L-histidinol phosphate + 2-oxoglutarate = 3-(imidazol-4-yl)-2-oxopropyl phosphate + L-glutamate. Its pathway is amino-acid biosynthesis; L-histidine biosynthesis; L-histidine from 5-phospho-alpha-D-ribose 1-diphosphate: step 7/9. In Dehalococcoides mccartyi (strain CBDB1), this protein is Histidinol-phosphate aminotransferase.